Consider the following 86-residue polypeptide: Palustrin-3b (86 aa).

The first 22 residues, 1-22 (MFTLKKPLLLIVLLGIISLSLC), serve as a signal peptide directing secretion. Positions 23–36 (EQERNADEDEESEI) are excised as a propeptide. An intrachain disulfide couples cysteine 81 to cysteine 86.

In terms of tissue distribution, expressed by the skin glands.

It localises to the secreted. Functionally, antimicrobial peptide. The sequence is that of Palustrin-3b from Odorrana versabilis (Chinese bamboo leaf odorous frog).